The following is a 125-amino-acid chain: Cytochrome c2 (125 aa).

The first 21 residues, 1–21 (MKAIKIAMVGAALVWSASAYA), serve as a signal peptide directing secretion. Residues 23 to 123 (GDPVKGEQVF…DVIAFLATQH (101 aa)) form the Cytochrome c domain. Heme c contacts are provided by Cys35, Cys38, His39, and Met101.

It belongs to the cytochrome c family. Post-translationally, binds 1 heme c group covalently per subunit.

Its function is as follows. Cytochrome c2 is found mainly in purple, non-sulfur, photosynthetic bacteria where it functions as the electron donor to the oxidized bacteriochlorophyll in the photophosphorylation pathway. However, it may also have a role in the respiratory chain and is found in some non-photosynthetic bacteria. The polypeptide is Cytochrome c2 (Rhodomicrobium vannielii (strain ATCC 17100 / DSM 162 / LMG 4299 / NCIMB 10020 / ATH 3.1.1)).